The following is a 127-amino-acid chain: uncharacterized protein (127 aa).

A run of 3 helical transmembrane segments spans residues 16–36 (AVIGGIINGILGAICCLCYVI), 59–79 (LVGAISGVIGGVIASILSFLF), and 100–120 (IIGFITAIIFGAILGAVGGVI).

It is found in the cell membrane. This is an uncharacterized protein from Methanocaldococcus jannaschii (strain ATCC 43067 / DSM 2661 / JAL-1 / JCM 10045 / NBRC 100440) (Methanococcus jannaschii).